Here is an 82-residue protein sequence, read N- to C-terminus: Mu-conotoxin GVIIJ (82 aa).

An N-terminal signal peptide occupies residues 1–22 (MKLTCVVIVAALLLTACQLITA). The propeptide occupies 23–47 (LDCGGTQKHRALRSTIKLSLLRQHR). W49 carries the post-translational modification 6'-bromotryptophan. 3 disulfides stabilise this stretch: C50-C65, C57-C69, and C64-C76. At P53 the chain carries 4-hydroxyproline. C71 contributes to the a protein binding site.

It belongs to the conotoxin O1 superfamily. Cys-71 is a key residue that tethers to the channel by covalent attachment, leading to nearly irreversible inhibition (k(off) very low). In order to determine the solution structure without dimerization, this residue was mutated to Cys. Expressed by the venom duct.

The protein resides in the secreted. Mu-conotoxins block voltage-gated sodium channels (Nav). This toxin (GVIIJ(SSG)) blocks Nav1.1/SCN1A (Kd=11 nM), Nav1.2/SCN2A (Kd=11 nM), Nav1.3/SCN3A (Kd=15 nM), Nav1.4/SCN4A (Kd=4.7 nM), Nav1.6/SCN8A (Kd=360 nM) and Nav1.7/SCN9A (Kd=41 nM). It binds the channel at the newly described site 8, which is composed by two surfaces whose one contains a non-disulfide-bonded cysteine (which is free to covalently bind the toxin Cys-71). It is noteworthy that coexpression of subunits beta-2 or beta-4 (but not beta-1 or beta-3) protects rNav1.1-1.7 against block by the toxin, since these subunits (thanks to their extracellular domain) covalently bind to the key cysteine of the channel, thus preventing the covalent binding of the toxin. This Conus geographus (Geography cone) protein is Mu-conotoxin GVIIJ.